The following is a 350-amino-acid chain: MNLRGLFQDFNPSKFLIYACLLLFSVLLALRLDGIIQWSYWAVFAPIWLWKLMVIVGASVGTGVWARNPQYRAEGETCVEFKAMLIAVGIHLLLLMFEVLVCDRIERGSHFWLLVFMPLFFVSPVSVAACVWGFRHDRSLELEILCSVNILQFIFIALRLDKIIHWPWLVVCVPLWILMSFLCLVVLYYIVWSVLFLRSMDVIAEQRRTHITMALSWMTIVVPLLTFEILLVHKLDGHNAFSCIPIFVPLWLSLITLMATTFGQKGGNHWWFGIRKDFCQFLLEIFPFLREYGNISYDLHHEDSEETEETPVPEPPKIAPMFRKKARVVITQSPGKYVLPPPKLNIEMPD.

7 helical membrane passes run 16-36, 41-61, 81-101, 111-131, 177-197, 211-231, and 240-260; these read LIYACLLLFSVLLALRLDGII, WAVFAPIWLWKLMVIVGASVG, FKAMLIAVGIHLLLLMFEVLV, FWLLVFMPLFFVSPVSVAACV, ILMSFLCLVVLYYIVWSVLFL, ITMALSWMTIVVPLLTFEILL, and AFSCIPIFVPLWLSLITLMAT. A mediates interaction with MAP1B region spans residues 298–350; it reads DLHHEDSEETEETPVPEPPKIAPMFRKKARVVITQSPGKYVLPPPKLNIEMPD.

This sequence belongs to the TMEM185 family. As to quaternary structure, interacts with MAP1B. As to expression, broadly expressed in brain where it is specifically expressed by neurons (at protein level). Also detected in some cells of arterioles, intestine, lung and testis (at protein level).

It is found in the cell projection. Its subcellular location is the dendrite. It localises to the membrane. The polypeptide is Transmembrane protein 185A (Tmem185a) (Mus musculus (Mouse)).